The sequence spans 290 residues: Malonyl-[acyl-carrier protein] O-methyltransferase (290 aa).

Belongs to the methyltransferase superfamily.

The catalysed reaction is malonyl-[ACP] + S-adenosyl-L-methionine = malonyl-[ACP] methyl ester + S-adenosyl-L-homocysteine. The protein operates within cofactor biosynthesis; biotin biosynthesis. Its function is as follows. Converts the free carboxyl group of a malonyl-thioester to its methyl ester by transfer of a methyl group from S-adenosyl-L-methionine (SAM). It allows to synthesize pimeloyl-ACP via the fatty acid synthetic pathway. The sequence is that of Malonyl-[acyl-carrier protein] O-methyltransferase from Gallionella capsiferriformans (strain ES-2) (Gallionella ferruginea capsiferriformans (strain ES-2)).